Consider the following 225-residue polypeptide: Cytochrome c oxidase subunit 2 (225 aa).

At 1 to 25 (MSTWMMFMFQESNSFYADNLVSFHN) the chain is on the mitochondrial intermembrane side. The chain crosses the membrane as a helical span at residues 26 to 47 (LVMMIIIMISTLTIYIIFDLFM). Residues 48-62 (NKFSNLFLLKNHNIE) are Mitochondrial matrix-facing. A helical transmembrane segment spans residues 63-82 (IIWTIVPIVILLIICFPSLK). The Mitochondrial intermembrane portion of the chain corresponds to 83 to 225 (ILYLIDEIIN…FFLNWINKQN (143 aa)). Cu cation contacts are provided by histidine 159, cysteine 194, glutamate 196, cysteine 198, histidine 202, and methionine 205. Residue glutamate 196 participates in Mg(2+) binding.

Belongs to the cytochrome c oxidase subunit 2 family. As to quaternary structure, component of the cytochrome c oxidase (complex IV, CIV), a multisubunit enzyme composed of a catalytic core of 3 subunits and several supernumerary subunits. The complex exists as a monomer or a dimer and forms supercomplexes (SCs) in the inner mitochondrial membrane with ubiquinol-cytochrome c oxidoreductase (cytochrome b-c1 complex, complex III, CIII). It depends on Cu cation as a cofactor.

It is found in the mitochondrion inner membrane. The enzyme catalyses 4 Fe(II)-[cytochrome c] + O2 + 8 H(+)(in) = 4 Fe(III)-[cytochrome c] + 2 H2O + 4 H(+)(out). Component of the cytochrome c oxidase, the last enzyme in the mitochondrial electron transport chain which drives oxidative phosphorylation. The respiratory chain contains 3 multisubunit complexes succinate dehydrogenase (complex II, CII), ubiquinol-cytochrome c oxidoreductase (cytochrome b-c1 complex, complex III, CIII) and cytochrome c oxidase (complex IV, CIV), that cooperate to transfer electrons derived from NADH and succinate to molecular oxygen, creating an electrochemical gradient over the inner membrane that drives transmembrane transport and the ATP synthase. Cytochrome c oxidase is the component of the respiratory chain that catalyzes the reduction of oxygen to water. Electrons originating from reduced cytochrome c in the intermembrane space (IMS) are transferred via the dinuclear copper A center (CU(A)) of subunit 2 and heme A of subunit 1 to the active site in subunit 1, a binuclear center (BNC) formed by heme A3 and copper B (CU(B)). The BNC reduces molecular oxygen to 2 water molecules using 4 electrons from cytochrome c in the IMS and 4 protons from the mitochondrial matrix. This is Cytochrome c oxidase subunit 2 (COII) from Apis koschevnikovi (Koschevnikov's honey bee).